A 503-amino-acid chain; its full sequence is Long-chain-fatty-acid--CoA ligase FadD13 (503 aa).

It belongs to the ATP-dependent AMP-binding enzyme family. As to quaternary structure, homodimer.

It is found in the cell membrane. The catalysed reaction is a long-chain fatty acid + ATP + CoA = a long-chain fatty acyl-CoA + AMP + diphosphate. It functions in the pathway lipid metabolism; fatty acid biosynthesis. Required for maintaining the appropriate mycolic acid composition and permeability of the envelope on its exposure to acidic pH. Catalyzes the activation of long-chain fatty acids as acyl-coenzyme A (acyl-CoA), which are then transferred to the multifunctional polyketide synthase (PKS) type III for further chain extension. The chain is Long-chain-fatty-acid--CoA ligase FadD13 (fadD13) from Mycobacterium tuberculosis (strain CDC 1551 / Oshkosh).